Reading from the N-terminus, the 92-residue chain is Small ribosomal subunit protein uS19 (92 aa).

The protein belongs to the universal ribosomal protein uS19 family.

Protein S19 forms a complex with S13 that binds strongly to the 16S ribosomal RNA. This is Small ribosomal subunit protein uS19 from Corynebacterium diphtheriae (strain ATCC 700971 / NCTC 13129 / Biotype gravis).